The following is a 753-amino-acid chain: A-kinase anchor protein 200 (753 aa).

Disordered stretches follow at residues 1–345 (MGKA…QIEA), 462–482 (VETR…PSRV), 531–604 (TEQE…IDPA), 620–641 (VEKE…SDEQ), and 658–684 (VEET…DKEN). Glycine 2 is lipidated: N-myristoyl glycine. Basic and acidic residues-rich tracts occupy residues 8-38 (RSID…DQKT) and 59-77 (AVEK…DLTT). Low complexity predominate over residues 81–93 (AAVAEGGDAVAET). Positions 119–148 (KSKSKKDKVKKKWSFRSISFGKKDKQKPAK) are F-actin binding. Basic residues predominate over residues 120–132 (SKSKKDKVKKKWS). Serine 132, serine 135, and serine 137 each carry phosphoserine. Basic and acidic residues predominate over residues 139–151 (GKKDKQKPAKSEE). Over residues 152-181 (ATSPTSGTTSPTTAEAEAAPAGDAAVAEPS) the composition is skewed to low complexity. Over residues 216–227 (EQEKQANGETEK) the composition is skewed to basic and acidic residues. Low complexity predominate over residues 246–262 (EPATVTATESNTTATEE). The tract at residues 345 to 725 (ASSEVIETVT…AEQEGESNNK (381 aa)) is interaction with PKA-R2. A compositionally biased stretch (pro residues) spans 468–480 (SPPPPLPKSPPPS). Basic and acidic residues predominate over residues 532-544 (EQEKQQEEAKVDS). A compositionally biased stretch (low complexity) spans 545-561 (VPETIEESSSTVVVEEV). Residues 578-594 (DVQKPIEDQDTPDEKES) show a composition bias toward basic and acidic residues. Residues 626 to 638 (SISSNVAESSSVS) are compositionally biased toward low complexity. Residues 674 to 684 (EEAHSDNDKEN) are compositionally biased toward basic and acidic residues.

As to quaternary structure, homodimer. Interacts with Cam; interaction is calcium-dependent and is inhibited by PKC-mediated phosphorylation of Akap200. Interacts with N/Notch; the interaction stabilizes N/Notch protein levels by preventing Cbl-mediated ubiquitination and subsequent lysosomal degradation of N/Notch. Interacts with Pka-R2. Binds to F-actin; interaction is independent of myristoylation, but is inhibited by Akap200 phosphorylation and Cam binding. Isoform B: Does not bind to Pka-R2. In terms of processing, myristoylated; myristoylation promotes accumulation at the cell periphery. Post-translationally, phosphorylated; phosphorylation prevents binding to F-actin and Cam. As to expression, detected in the brain in both neurons and glia (including perineurial glia); specifically in the neuronal nuclei in the cortex and synaptic neuropil (at protein level). Detected in germline cells, somatic follicle cells and outer rim of the ring canals during oogenesis (at protein level). Isoform A: Detected in the adult (at protein level). Isoform B: Detected in the adult with higher levels in the head (at protein level).

The protein resides in the cytoplasm. It is found in the cytosol. It localises to the cell membrane. Its subcellular location is the cytoskeleton. Scaffolding protein involved in the regulation of PKA signaling and anchoring to the actin cytoskeleton integrating signals propagated by cAMP, diacylglycerol and calcium. Contributes to the maintenance and regulation of cytoskeletal structures in germline via PKA-mediated signaling. As part of ethanol response in the glia, mediates ethanol-induced structural remodeling of actin cytoskeleton and perineurial membrane topology by anchoring PKA to the membrane of perineurial glia. In specific tissues such as eye and thorax, promotes N/Notch protein stability by inhibiting Cbl-mediated ubiquitination and lysosomal degradation pathway of N/Notch in a PKA-independent way. In the circadian brain neurons evening cells (E-cells), might have a role in circadian pacemaker synchronization by playing a redundant role in signaling downstream of the G protein-couple receptor Pdfr. This chain is A-kinase anchor protein 200, found in Drosophila melanogaster (Fruit fly).